A 417-amino-acid chain; its full sequence is Snake venom metalloproteinase acutolysin-C (417 aa).

The signal sequence occupies residues 1-20 (MIQVLLVTICLAALPYQGSS). Positions 21-189 (IMLESGKVND…KRPSRLNLTP (169 aa)) are cleaved as a propeptide — activation peptide. A Peptidase M12B domain is found at 197–392 (TSVNLQLIVD…KKPKCIHKKS (196 aa)). Disulfide bonds link C308–C387, C349–C371, and C351–C354. H333 provides a ligand contact to Zn(2+). E334 is a catalytic residue. Zn(2+) is bound by residues H337 and H343. The propeptide occupies 393-417 (LKTDTVSTSVSGNEPLDDNVDGFHA). The disordered stretch occupies residues 398–417 (VSTSVSGNEPLDDNVDGFHA). The segment covering 407–417 (PLDDNVDGFHA) has biased composition (acidic residues).

It belongs to the venom metalloproteinase (M12B) family. P-I subfamily. As to quaternary structure, monomer. It depends on Zn(2+) as a cofactor. As to expression, expressed by the venom gland.

It localises to the secreted. Its function is as follows. This protein is an alkaline zinc metalloprotease from snake venom that possesses weak hemorrhagic activity. The polypeptide is Snake venom metalloproteinase acutolysin-C (Deinagkistrodon acutus (Hundred-pace snake)).